The chain runs to 484 residues: Sushi domain-containing protein 4 (484 aa).

The first 35 residues, 1–35 (MFHHADKGGKKSAFGHPVCGQIILSIILLRPPLLV), serve as a signal peptide directing secretion. Sushi domains are found at residues 46-110 (QICK…VCLS), 111-168 (EDCL…QPTC), 169-230 (QGCL…RCLD), and 232-295 (EACS…YCVK). Intrachain disulfides connect C48–C90, C76–C108, C113–C156, C138–C168, C171–C215, C201–C228, C234–C280, and C265–C293. Residues N95 and N125 are each glycosylated (N-linked (GlcNAc...) asparagine). N-linked (GlcNAc...) asparagine glycosylation is present at N183. The helical transmembrane segment at 311 to 331 (WKVVACTATSVLLALLLVITA) threads the bilayer. Positions 374-484 (SGNYCQPPND…PLVEDGEEDC (111 aa)) are disordered. Polar residues-rich tracts occupy residues 424–442 (DSLS…SSSH) and 449–467 (SEKT…TSPS). The segment covering 470–484 (IADEIPLVEDGEEDC) has biased composition (acidic residues).

It localises to the membrane. The protein is Sushi domain-containing protein 4 (susd4) of Danio rerio (Zebrafish).